A 134-amino-acid chain; its full sequence is Histone H2A (134 aa).

The segment covering 1–11 (MTGGGKSGGKA) has biased composition (gly residues). The disordered stretch occupies residues 1-24 (MTGGGKSGGKASGSKNAQSRSSKA). 2 positions are modified to N6-acetyllysine: Lys-6 and Lys-10. An N5-methylglutamine modification is found at Gln-107.

Belongs to the histone H2A family. As to quaternary structure, the nucleosome is a histone octamer containing two molecules each of H2A, H2B, H3 and H4 assembled in one H3-H4 heterotetramer and two H2A-H2B heterodimers. The octamer wraps approximately 147 bp of DNA. In terms of processing, acetylated by ESA1 to form H2AK4ac and H2AK7ac.

It localises to the nucleus. The protein localises to the chromosome. Its function is as follows. Core component of nucleosome. Nucleosomes wrap and compact DNA into chromatin, limiting DNA accessibility to the cellular machineries which require DNA as a template. Histones thereby play a central role in transcription regulation, DNA repair, DNA replication and chromosomal stability. DNA accessibility is regulated via a complex set of post-translational modifications of histones, also called histone code, and nucleosome remodeling. This is Histone H2A (HTA1) from Gibberella zeae (strain ATCC MYA-4620 / CBS 123657 / FGSC 9075 / NRRL 31084 / PH-1) (Wheat head blight fungus).